The sequence spans 132 residues: Large ribosomal subunit protein bL17 (132 aa).

The protein belongs to the bacterial ribosomal protein bL17 family. Part of the 50S ribosomal subunit. Contacts protein L32.

In Ehrlichia canis (strain Jake), this protein is Large ribosomal subunit protein bL17.